A 289-amino-acid chain; its full sequence is Inorganic pyrophosphatase (289 aa).

Residue R80 participates in diphosphate binding. Residues D117, D122, and D154 each coordinate Mg(2+).

Belongs to the PPase family. In terms of assembly, homodimer. Mg(2+) is required as a cofactor.

The protein resides in the cytoplasm. It carries out the reaction diphosphate + H2O = 2 phosphate + H(+). This Schizosaccharomyces pombe (strain 972 / ATCC 24843) (Fission yeast) protein is Inorganic pyrophosphatase (ppa1).